The chain runs to 356 residues: Icosanoyl-CoA 5-desaturase (356 aa).

The chain crosses the membrane as a helical span at residues Leu5 to Ala25. The disordered stretch occupies residues Leu38–Asp58. Over residues Ile42 to Asp58 the composition is skewed to basic and acidic residues. Transmembrane regions (helical) follow at residues Asn88–Trp108 and Phe111–Phe131. The Histidine box-1 signature appears at His132–His137. Positions His169–His173 match the Histidine box-2 motif. Residues Ala236–Phe256 form a helical membrane-spanning segment. A Histidine box-3 motif is present at residues His302–His306.

The protein belongs to the fatty acid desaturase type 1 family. It depends on Fe(2+) as a cofactor.

The protein resides in the membrane. The catalysed reaction is eicosanoyl-CoA + 2 Fe(II)-[cytochrome b5] + O2 + 2 H(+) = (5Z)-eicosenoyl-CoA + 2 Fe(III)-[cytochrome b5] + 2 H2O. Its pathway is lipid metabolism; monounsaturated fatty acid biosynthesis. Functionally, desaturase involved in the biosynthesis of (5Z)-icos-5-enoate, an unusual monounsaturated fatty acid that makes up to 60% of the total fatty acids in Limnanthes sp. seed oil. Only acts on saturated fatty acids. The sequence is that of Icosanoyl-CoA 5-desaturase from Limnanthes douglasii (Douglas' meadowfoam).